A 255-amino-acid chain; its full sequence is ParA family protein CPn_0805/CP_1066/CPj0805/CpB0834 (255 aa).

This sequence belongs to the ParA family.

The chain is ParA family protein CPn_0805/CP_1066/CPj0805/CpB0834 from Chlamydia pneumoniae (Chlamydophila pneumoniae).